Consider the following 234-residue polypeptide: Large ribosomal subunit protein uL1 (234 aa).

This sequence belongs to the universal ribosomal protein uL1 family. Part of the 50S ribosomal subunit.

Its function is as follows. Binds directly to 23S rRNA. The L1 stalk is quite mobile in the ribosome, and is involved in E site tRNA release. Protein L1 is also a translational repressor protein, it controls the translation of the L11 operon by binding to its mRNA. This chain is Large ribosomal subunit protein uL1, found in Cronobacter sakazakii (strain ATCC BAA-894) (Enterobacter sakazakii).